Consider the following 344-residue polypeptide: Dihydroorotate dehydrogenase (quinone) (344 aa).

FMN contacts are provided by residues 65-69 (AGLDK) and threonine 89. Lysine 69 lines the substrate pocket. A substrate-binding site is contributed by 114-118 (NRMGF). The FMN site is built by asparagine 142 and asparagine 175. Asparagine 175 serves as a coordination point for substrate. Catalysis depends on serine 178, which acts as the Nucleophile. A substrate-binding site is contributed by asparagine 180. Positions 220 and 248 each coordinate FMN. 249–250 (NT) is a substrate binding site. FMN is bound by residues glycine 271, glycine 300, and 321-322 (YT).

This sequence belongs to the dihydroorotate dehydrogenase family. Type 2 subfamily. As to quaternary structure, monomer. The cofactor is FMN.

It is found in the cell membrane. It carries out the reaction (S)-dihydroorotate + a quinone = orotate + a quinol. The protein operates within pyrimidine metabolism; UMP biosynthesis via de novo pathway; orotate from (S)-dihydroorotate (quinone route): step 1/1. Its function is as follows. Catalyzes the conversion of dihydroorotate to orotate with quinone as electron acceptor. This is Dihydroorotate dehydrogenase (quinone) from Paraburkholderia phymatum (strain DSM 17167 / CIP 108236 / LMG 21445 / STM815) (Burkholderia phymatum).